Reading from the N-terminus, the 104-residue chain is MLYLLKKLKHIDSYGESNLSMFYLKFYCPWKLCPLLPILYGRNKSVQNAWSCHKLHRFIDFPTPSANMNFFFFIRVCYGTVSLFISTFLKKISFFIYVNFTVYF.

This is an uncharacterized protein from Saccharomyces cerevisiae (strain ATCC 204508 / S288c) (Baker's yeast).